Reading from the N-terminus, the 517-residue chain is Splicing factor U2AF 59 kDa subunit (517 aa).

Positions 1–13 are enriched in low complexity; sequence MDLSSRLSSGSSR. The tract at residues 1–112 is disordered; that stretch reads MDLSSRLSSG…PSRERSVRSI (112 aa). A compositionally biased stretch (basic and acidic residues) spans 20 to 89; it reads DYRDEEPRRE…RRYDDYEPRS (70 aa). 2 RRM domains span residues 310–388 and 418–509; these read DKIY…FACV and RVLQ…FYGE.

This sequence belongs to the splicing factor SR family. In terms of assembly, forms a heterodimer with the U2AF small subunit. Can also form a homodimer. U2AF large subunit (U2AF59), U2AF small subunit (U2AF23) and SF1 (bpb1) interact to form a complex required for complex A formation. Interacts with wat1/pop3.

The protein resides in the nucleus. Its function is as follows. Necessary for the splicing of pre-mRNA. The SF1-U2AF59-U2AF23 complex has a role in the recognition of the branch site (5'-UACUAAC-3'), the pyrimidine tract and the 3'-splice site at the 3'-end of introns. This Schizosaccharomyces pombe (strain 972 / ATCC 24843) (Fission yeast) protein is Splicing factor U2AF 59 kDa subunit (prp2).